The chain runs to 208 residues: dTTP/UTP pyrophosphatase (208 aa).

The segment at 28 to 48 (DRIHPADIDETPQRAEHPRSL) is disordered. Residue aspartate 79 is the Proton acceptor of the active site.

It belongs to the Maf family. YhdE subfamily. The cofactor is a divalent metal cation.

The protein localises to the cytoplasm. The catalysed reaction is dTTP + H2O = dTMP + diphosphate + H(+). It carries out the reaction UTP + H2O = UMP + diphosphate + H(+). Nucleoside triphosphate pyrophosphatase that hydrolyzes dTTP and UTP. May have a dual role in cell division arrest and in preventing the incorporation of modified nucleotides into cellular nucleic acids. This Brucella abortus (strain 2308) protein is dTTP/UTP pyrophosphatase.